The following is a 267-amino-acid chain: Ribonuclease HII (267 aa).

In terms of domain architecture, RNase H type-2 spans 57-245 (WPVAGCDEVG…VVAARERHRA (189 aa)). Positions 63, 64, and 154 each coordinate a divalent metal cation.

The protein belongs to the RNase HII family. It depends on Mn(2+) as a cofactor. Requires Mg(2+) as cofactor.

Its subcellular location is the cytoplasm. It carries out the reaction Endonucleolytic cleavage to 5'-phosphomonoester.. In terms of biological role, endonuclease that specifically degrades the RNA of RNA-DNA hybrids. This chain is Ribonuclease HII, found in Nitrobacter hamburgensis (strain DSM 10229 / NCIMB 13809 / X14).